The sequence spans 461 residues: Trimethylamine monooxygenase (461 aa).

Residues Ser-14, Glu-39, Lys-40, Gln-41, Met-47, Trp-48, and His-64 each coordinate FAD. NADP(+)-binding residues include Trp-72 and Asn-74. FAD-binding residues include Asn-74 and Ala-127. Residues Ser-206, Ser-207, Ser-209, Arg-230, and Thr-231 each coordinate NADP(+). FAD-binding residues include Gln-319 and Thr-322. Arg-413 is a binding site for NADP(+).

Belongs to the FMO family. FAD serves as cofactor.

It catalyses the reaction trimethylamine + NADPH + O2 = trimethylamine N-oxide + NADP(+) + H2O. In terms of biological role, catalyzes the oxidation of trimethylamine (TMA) to produce trimethylamine N-oxide (TMAO). The produced TMAO is accumulated in the cell, functioning as a piezolyte, improving both growth and survival at high hydrostatic pressure (HHP). The protein is Trimethylamine monooxygenase of Myroides profundi.